The sequence spans 274 residues: MDKSIGVIDSGVGGLTVVHELMRQLPKEQLIYLGDTARCPYGPRSKEEVRQFTWEMVDFLLTKNIKMLVVACNTATAFTLKDLKEQLDIPVIGVIQPGARAAIKSTTNNQVGVIGTEGTISSGAYSQALEKIKSDIQVSGLACPPFVPMVERGVLSGPEAKAVVSEALRPFSNNKEMDTLILGCTHYPLLKSTIQEVMGEEVTVISSSEETARETSTLLDVHQIMNRSDLVPLHQFYTTGDLEIFIEIAKTIFQESHFQMLTIKQANISTNKVW.

Residues 9–10 (DS) and 41–42 (YG) contribute to the substrate site. Catalysis depends on Cys-72, which acts as the Proton donor/acceptor. 73–74 (NT) contributes to the substrate binding site. Residue Cys-184 is the Proton donor/acceptor of the active site. Substrate is bound at residue 185–186 (TH).

It belongs to the aspartate/glutamate racemases family.

The catalysed reaction is L-glutamate = D-glutamate. Its pathway is cell wall biogenesis; peptidoglycan biosynthesis. Provides the (R)-glutamate required for cell wall biosynthesis. This chain is Glutamate racemase, found in Oceanobacillus iheyensis (strain DSM 14371 / CIP 107618 / JCM 11309 / KCTC 3954 / HTE831).